A 224-amino-acid chain; its full sequence is Ribonuclease HII (224 aa).

The region spanning 1-210 (MKVAGADEAG…AKKIEEKFKR (210 aa)) is the RNase H type-2 domain. Residues Asp-7, Glu-8, and Asp-105 each coordinate a divalent metal cation.

This sequence belongs to the RNase HII family. The cofactor is Mn(2+). Mg(2+) serves as cofactor.

The protein resides in the cytoplasm. The catalysed reaction is Endonucleolytic cleavage to 5'-phosphomonoester.. Functionally, endonuclease that specifically degrades the RNA of RNA-DNA hybrids. The polypeptide is Ribonuclease HII (rnhB) (Pyrococcus abyssi (strain GE5 / Orsay)).